A 70-amino-acid polypeptide reads, in one-letter code: Small ribosomal subunit protein bS21 (70 aa).

Belongs to the bacterial ribosomal protein bS21 family.

The polypeptide is Small ribosomal subunit protein bS21 (Paracidovorax citrulli (strain AAC00-1) (Acidovorax citrulli)).